Consider the following 429-residue polypeptide: Z-DNA-binding protein 1 (429 aa).

Z-binding domains follow at residues 8 to 70 and 103 to 166; these read PGRE…CLGG and PQFS…TIYR. A disordered region spans residues 68-107; the sequence is LGGTDPEGEGPAELALSSPAERPQQHAATIPETPGPQFSQ. Short sequence motifs (RIP homotypic interaction motif (RHIM)) lie at residues 195 to 219 and 253 to 277; these read NSWI…RQTV and DIHM…LHGV. Disordered stretches follow at residues 277 to 299 and 339 to 429; these read VPSE…AAGP and KMSI…GGGI. Gly residues predominate over residues 347–358; sequence AGPGGVAGSGEG. The span at 407–420 shows a compositional bias: basic and acidic residues; that stretch reads KAAEGSHYVDEASH.

In terms of assembly, homodimer. Interacts (via RIP homotypic interaction motif) with RIPK3; leading to RIPK3 activation and necroptosis; interaction is enhanced by CASP6. Interacts (via RIP homotypic interaction motif) with RIPK1. Component of the AIM2 PANoptosome complex, a multiprotein complex that drives inflammatory cell death (PANoptosis). (Microbial infection) Interacts (via RIP homotypic interaction motif/RHIM) with herpes simplex virus 1/HHV-1 protein RIR1/ICP6 (via RHIM); this interaction may induce heteromeric amyloid assemblies and prevent necroptosis activation. Interacts with human herpes simplex virus 1/HHV-1 protein ICP0. Phosphorylated. Highly expressed in lymphatic tissues including lymph node, leukocytes, tonsil, bone marrow and spleen. Expressed to a lesser extent in thymus, lung and liver.

The protein localises to the cytoplasm. It localises to the nucleus. With respect to regulation, ZBP1-dependent necroptosis is normally inhibited by RIPK1: RIPK1 inhibits the ZBP1-induced activation of RIPK3 via FADD-mediated recruitment of CASP8, which cleaves RIPK1 and limits TNF-induced necroptosis. Its function is as follows. Key innate sensor that recognizes and binds Z-RNA structures, which are produced by a number of viruses, such as herpesvirus, orthomyxovirus or flavivirus, and triggers different forms of cell death. ZBP1 acts as an essential mediator of pyroptosis, necroptosis and apoptosis (PANoptosis), an integral part of host defense against pathogens, by activating RIPK3, caspase-8 (CASP8), and the NLRP3 inflammasome. Key activator of necroptosis, a programmed cell death process in response to death-inducing TNF-alpha family members, via its ability to bind Z-RNA: once activated upon Z-RNA-binding, ZBP1 interacts and stimulates RIPK3 kinase, which phosphorylates and activates MLKL, triggering execution of programmed necrosis. In addition to TNF-induced necroptosis, necroptosis can also take place in the nucleus in response to orthomyxoviruses infection: ZBP1 recognizes and binds Z-RNA structures that are produced in infected nuclei by orthomyxoviruses, such as the influenza A virus (IAV), leading to ZBP1 activation, RIPK3 stimulation and subsequent MLKL phosphorylation, triggering disruption of the nuclear envelope and leakage of cellular DNA into the cytosol. ZBP1-dependent cell death in response to IAV infection promotes interleukin-1 alpha (IL1A) induction in an NLRP3-inflammasome-independent manner: IL1A expression is required for the optimal interleukin-1 beta (IL1B) production, and together, these cytokines promote infiltration of inflammatory neutrophils to the lung, leading to the formation of neutrophil extracellular traps. In addition to its direct role in driving necroptosis via its ability to sense Z-RNAs, also involved in PANoptosis triggered in response to bacterial infection: component of the AIM2 PANoptosome complex, a multiprotein complex that triggers PANoptosis. Also acts as the apical sensor of fungal infection responsible for activating PANoptosis. Involved in CASP8-mediated cell death via its interaction with RIPK1 but independently of its ability to sense Z-RNAs. In some cell types, also able to restrict viral replication by promoting cell death-independent responses. In response to Zika virus infection in neurons, promotes a cell death-independent pathway that restricts viral replication: together with RIPK3, promotes a death-independent transcriptional program that modifies the cellular metabolism via up-regulation expression of the enzyme ACOD1/IRG1 and production of the metabolite itaconate. Itaconate inhibits the activity of succinate dehydrogenase, generating a metabolic state in neurons that suppresses replication of viral genomes. (Microbial infection) In case of herpes simplex virus 1/HHV-1 infection, forms hetero-amyloid structures with HHV-1 protein RIR1/ICP6 which may inhibit ZBP1-mediated necroptosis, thereby preventing host cell death pathway and allowing viral evasion. This Homo sapiens (Human) protein is Z-DNA-binding protein 1.